Consider the following 37-residue polypeptide: Large ribosomal subunit protein bL36c (37 aa).

The protein belongs to the bacterial ribosomal protein bL36 family.

It is found in the plastid. Its subcellular location is the chloroplast. The sequence is that of Large ribosomal subunit protein bL36c (rpl36) from Marchantia polymorpha (Common liverwort).